Here is a 464-residue protein sequence, read N- to C-terminus: Protein FAM90A22 (464 aa).

Disordered regions lie at residues 1-43 (MMAR…PRLK), 70-389 (PATL…HDGA), and 415-437 (HSPEKPGAFLAQSPHVSEKSEAP). Basic and acidic residues-rich tracts occupy residues 74-89 (GKKEGKENLKPWKPRA) and 97-114 (NKDKGEKEERPRQQDPQR). Over residues 182 to 197 (SLSPLRKTSLSSSSSL) the composition is skewed to low complexity.

It belongs to the FAM90 family.

The sequence is that of Protein FAM90A22 from Homo sapiens (Human).